The following is a 693-amino-acid chain: E3 ubiquitin-protein ligase MARCHF7 (693 aa).

An N-acetylmethionine modification is found at M1. Disordered stretches follow at residues 1-43, 69-136, 158-281, 296-342, 361-430, 445-475, and 512-533; these read MESK…RDSS, ESEI…LGSF, LMDY…RRTT, FFSR…EGRA, LSQN…RDSN, AANR…RNPG, and WNST…PEKL. 5 stretches are compositionally biased toward polar residues: residues 14 to 36, 95 to 105, 112 to 132, 167 to 184, and 192 to 215; these read VQPS…LNDS, SCTNCASTSAG, LNTV…SSMV, DFTT…SYSQ, and AVST…QTVP. Residues 216–234 are compositionally biased toward low complexity; sequence SSRDSSRSSFRSHFSPRQS. Positions 236–267 are enriched in polar residues; it reads SFRNSSHPAFSYFSSRNETPTISNSERGSSQR. Positions 268-279 are enriched in basic and acidic residues; the sequence is PYRESSDNEGRR. Low complexity predominate over residues 296–305; the sequence is FFSRRSSQDS. Polar residues predominate over residues 306 to 323; that stretch reads LNTRSLSSENYISPRTLT. The residue at position 318 (S318) is a Phosphoserine. The segment covering 324–337 has biased composition (low complexity); it reads SQSRNNGTSSSSDV. S390 bears the Phosphoserine mark. The segment covering 451-463 has biased composition (low complexity); that stretch reads ASGASSSAAAGGS. Over residues 517-533 the composition is skewed to basic and acidic residues; sequence GKNDKAKSAPSRDPEKL. The RING-CH-type zinc finger occupies 546-616; that stretch reads DDEEEGDLCR…ELCKEKLQLN (71 aa). Zn(2+) is bound by residues C554, C557, C572, C574, H582, C585, C606, and C609. T688 is subject to Phosphothreonine. S689 is subject to Phosphoserine.

In terms of tissue distribution, expressed in brain, thymus, muscle and kidney.

Its subcellular location is the cytoplasm. The enzyme catalyses S-ubiquitinyl-[E2 ubiquitin-conjugating enzyme]-L-cysteine + [acceptor protein]-L-lysine = [E2 ubiquitin-conjugating enzyme]-L-cysteine + N(6)-ubiquitinyl-[acceptor protein]-L-lysine.. The protein operates within protein modification; protein ubiquitination. Functionally, E3 ubiquitin-protein ligase which may specifically enhance the E2 activity of HIP2. E3 ubiquitin ligases accept ubiquitin from an E2 ubiquitin-conjugating enzyme in the form of a thioester and then directly transfer the ubiquitin to targeted substrates. May be involved in T-cell proliferation by regulating LIF secretion. May play a role in lysosome homeostasis. Promotes 'Lys-6', 'Lys-11' and 'Lys-63'-linked mixed polyubiquitination on ATG14 leading to the inhibition of autophagy by impairing the interaction between ATG14 and STX7. Participates in the dopamine-mediated negative regulation of the NLRP3 inflammasome by promoting its uibiquitination and subsequent degradation. The polypeptide is E3 ubiquitin-protein ligase MARCHF7 (Marchf7) (Mus musculus (Mouse)).